Here is a 124-residue protein sequence, read N- to C-terminus: Aspartate 1-decarboxylase (124 aa).

Residue serine 25 is the Schiff-base intermediate with substrate; via pyruvic acid of the active site. The residue at position 25 (serine 25) is a Pyruvic acid (Ser). Threonine 57 lines the substrate pocket. The Proton donor role is filled by tyrosine 58. 71–73 (GAA) is a binding site for substrate.

The protein belongs to the PanD family. Heterooctamer of four alpha and four beta subunits. Pyruvate is required as a cofactor. Post-translationally, is synthesized initially as an inactive proenzyme, which is activated by self-cleavage at a specific serine bond to produce a beta-subunit with a hydroxyl group at its C-terminus and an alpha-subunit with a pyruvoyl group at its N-terminus.

It is found in the cytoplasm. It carries out the reaction L-aspartate + H(+) = beta-alanine + CO2. Its pathway is cofactor biosynthesis; (R)-pantothenate biosynthesis; beta-alanine from L-aspartate: step 1/1. Functionally, catalyzes the pyruvoyl-dependent decarboxylation of aspartate to produce beta-alanine. This Bdellovibrio bacteriovorus (strain ATCC 15356 / DSM 50701 / NCIMB 9529 / HD100) protein is Aspartate 1-decarboxylase.